The primary structure comprises 208 residues: FMN-dependent NADH:quinone oxidoreductase 4 (208 aa).

Belongs to the azoreductase type 1 family. In terms of assembly, homodimer. Requires FMN as cofactor.

It catalyses the reaction 2 a quinone + NADH + H(+) = 2 a 1,4-benzosemiquinone + NAD(+). The catalysed reaction is N,N-dimethyl-1,4-phenylenediamine + anthranilate + 2 NAD(+) = 2-(4-dimethylaminophenyl)diazenylbenzoate + 2 NADH + 2 H(+). Quinone reductase that provides resistance to thiol-specific stress caused by electrophilic quinones. Functionally, also exhibits azoreductase activity. Catalyzes the reductive cleavage of the azo bond in aromatic azo compounds to the corresponding amines. This chain is FMN-dependent NADH:quinone oxidoreductase 4, found in Bacillus cereus (strain ZK / E33L).